We begin with the raw amino-acid sequence, 157 residues long: uncharacterized protein (157 aa).

Disordered regions lie at residues 76–105 (AINQ…GPRG) and 132–157 (VRAP…RMRG). Low complexity predominate over residues 135–148 (PSTKPSKTSSSNNP).

The protein to M.pneumoniae MPN_091 and MPN_413.

This is an uncharacterized protein from Mycoplasma pneumoniae (strain ATCC 29342 / M129 / Subtype 1) (Mycoplasmoides pneumoniae).